The sequence spans 159 residues: 3-dehydroquinate dehydratase (159 aa).

Tyr31 functions as the Proton acceptor in the catalytic mechanism. The substrate site is built by Asn82, His88, and Asp95. Residue His109 is the Proton donor of the active site. Substrate is bound by residues 110-111 (IS) and Arg120.

It belongs to the type-II 3-dehydroquinase family. As to quaternary structure, homododecamer.

It carries out the reaction 3-dehydroquinate = 3-dehydroshikimate + H2O. It participates in metabolic intermediate biosynthesis; chorismate biosynthesis; chorismate from D-erythrose 4-phosphate and phosphoenolpyruvate: step 3/7. Catalyzes a trans-dehydration via an enolate intermediate. This chain is 3-dehydroquinate dehydratase, found in Streptomyces avermitilis (strain ATCC 31267 / DSM 46492 / JCM 5070 / NBRC 14893 / NCIMB 12804 / NRRL 8165 / MA-4680).